Consider the following 375-residue polypeptide: Succinyl-diaminopimelate desuccinylase (375 aa).

His-66 provides a ligand contact to Zn(2+). Residue Asp-68 is part of the active site. Asp-99 lines the Zn(2+) pocket. The active-site Proton acceptor is Glu-133. 3 residues coordinate Zn(2+): Glu-134, Glu-162, and His-348.

The protein belongs to the peptidase M20A family. DapE subfamily. In terms of assembly, homodimer. Zn(2+) serves as cofactor. Requires Co(2+) as cofactor.

It catalyses the reaction N-succinyl-(2S,6S)-2,6-diaminopimelate + H2O = (2S,6S)-2,6-diaminopimelate + succinate. It functions in the pathway amino-acid biosynthesis; L-lysine biosynthesis via DAP pathway; LL-2,6-diaminopimelate from (S)-tetrahydrodipicolinate (succinylase route): step 3/3. In terms of biological role, catalyzes the hydrolysis of N-succinyl-L,L-diaminopimelic acid (SDAP), forming succinate and LL-2,6-diaminopimelate (DAP), an intermediate involved in the bacterial biosynthesis of lysine and meso-diaminopimelic acid, an essential component of bacterial cell walls. The chain is Succinyl-diaminopimelate desuccinylase from Shigella dysenteriae serotype 1 (strain Sd197).